A 379-amino-acid chain; its full sequence is UDP-4-amino-4-deoxy-L-arabinose--oxoglutarate aminotransferase (379 aa).

Lysine 182 is modified (N6-(pyridoxal phosphate)lysine).

The protein belongs to the DegT/DnrJ/EryC1 family. ArnB subfamily. As to quaternary structure, homodimer. Requires pyridoxal 5'-phosphate as cofactor.

The enzyme catalyses UDP-4-amino-4-deoxy-beta-L-arabinose + 2-oxoglutarate = UDP-beta-L-threo-pentopyranos-4-ulose + L-glutamate. Its pathway is nucleotide-sugar biosynthesis; UDP-4-deoxy-4-formamido-beta-L-arabinose biosynthesis; UDP-4-deoxy-4-formamido-beta-L-arabinose from UDP-alpha-D-glucuronate: step 2/3. The protein operates within bacterial outer membrane biogenesis; lipopolysaccharide biosynthesis. Its function is as follows. Catalyzes the conversion of UDP-4-keto-arabinose (UDP-Ara4O) to UDP-4-amino-4-deoxy-L-arabinose (UDP-L-Ara4N). The modified arabinose is attached to lipid A and is required for resistance to polymyxin and cationic antimicrobial peptides. This is UDP-4-amino-4-deoxy-L-arabinose--oxoglutarate aminotransferase from Escherichia coli O81 (strain ED1a).